The chain runs to 644 residues: Acetyl-coenzyme A synthetase (644 aa).

CoA-binding positions include 190–193 (RGSK) and T308. ATP contacts are provided by residues 384–386 (GEP), 408–413 (DTWWQT), D497, and R512. S520 lines the CoA pocket. R523 contributes to the ATP binding site. Mg(2+) contacts are provided by V534, H536, and V539. Residue R581 coordinates CoA. N6-acetyllysine is present on K606.

The protein belongs to the ATP-dependent AMP-binding enzyme family. Mg(2+) is required as a cofactor. Acetylated. Deacetylation by the SIR2-homolog deacetylase activates the enzyme.

The enzyme catalyses acetate + ATP + CoA = acetyl-CoA + AMP + diphosphate. Catalyzes the conversion of acetate into acetyl-CoA (AcCoA), an essential intermediate at the junction of anabolic and catabolic pathways. AcsA undergoes a two-step reaction. In the first half reaction, AcsA combines acetate with ATP to form acetyl-adenylate (AcAMP) intermediate. In the second half reaction, it can then transfer the acetyl group from AcAMP to the sulfhydryl group of CoA, forming the product AcCoA. In Magnetococcus marinus (strain ATCC BAA-1437 / JCM 17883 / MC-1), this protein is Acetyl-coenzyme A synthetase.